A 141-amino-acid chain; its full sequence is Large ribosomal subunit protein uL11 (141 aa).

It belongs to the universal ribosomal protein uL11 family. In terms of assembly, part of the ribosomal stalk of the 50S ribosomal subunit. Interacts with L10 and the large rRNA to form the base of the stalk. L10 forms an elongated spine to which L12 dimers bind in a sequential fashion forming a multimeric L10(L12)X complex. In terms of processing, one or more lysine residues are methylated.

In terms of biological role, forms part of the ribosomal stalk which helps the ribosome interact with GTP-bound translation factors. The polypeptide is Large ribosomal subunit protein uL11 (Phytoplasma australiense).